The chain runs to 138 residues: Nucleoside diphosphate kinase (138 aa).

Residues lysine 11, phenylalanine 59, arginine 87, threonine 93, arginine 104, and asparagine 114 each contribute to the ATP site. Histidine 117 (pros-phosphohistidine intermediate) is an active-site residue.

Belongs to the NDK family. Mg(2+) is required as a cofactor.

It is found in the cytoplasm. It catalyses the reaction a 2'-deoxyribonucleoside 5'-diphosphate + ATP = a 2'-deoxyribonucleoside 5'-triphosphate + ADP. The enzyme catalyses a ribonucleoside 5'-diphosphate + ATP = a ribonucleoside 5'-triphosphate + ADP. In terms of biological role, major role in the synthesis of nucleoside triphosphates other than ATP. The ATP gamma phosphate is transferred to the NDP beta phosphate via a ping-pong mechanism, using a phosphorylated active-site intermediate. The polypeptide is Nucleoside diphosphate kinase (Saccharolobus islandicus (strain Y.N.15.51 / Yellowstone #2) (Sulfolobus islandicus)).